Here is a 542-residue protein sequence, read N- to C-terminus: Formate--tetrahydrofolate ligase (542 aa).

53–60 (TPAGEGKT) is an ATP binding site.

This sequence belongs to the formate--tetrahydrofolate ligase family.

It catalyses the reaction (6S)-5,6,7,8-tetrahydrofolate + formate + ATP = (6R)-10-formyltetrahydrofolate + ADP + phosphate. Its pathway is one-carbon metabolism; tetrahydrofolate interconversion. The polypeptide is Formate--tetrahydrofolate ligase (Thermotoga petrophila (strain ATCC BAA-488 / DSM 13995 / JCM 10881 / RKU-1)).